The following is a 122-amino-acid chain: Large ribosomal subunit protein uL18 (122 aa).

The protein belongs to the universal ribosomal protein uL18 family. As to quaternary structure, part of the 50S ribosomal subunit; part of the 5S rRNA/L5/L18/L25 subcomplex. Contacts the 5S and 23S rRNAs.

In terms of biological role, this is one of the proteins that bind and probably mediate the attachment of the 5S RNA into the large ribosomal subunit, where it forms part of the central protuberance. The chain is Large ribosomal subunit protein uL18 from Synechococcus sp. (strain JA-3-3Ab) (Cyanobacteria bacterium Yellowstone A-Prime).